The following is a 264-amino-acid chain: LIMR family protein SELMODRAFT_416716 (264 aa).

4 helical membrane-spanning segments follow: residues 23 to 43, 96 to 116, 194 to 214, and 225 to 245; these read VVIL…VIGY, ILFT…LIFA, IIWL…FPFL, and WGLL…MSVI.

The protein belongs to the LIMR family.

The protein resides in the membrane. The protein is LIMR family protein SELMODRAFT_416716 of Selaginella moellendorffii (Spikemoss).